Consider the following 289-residue polypeptide: UDP-3-O-acyl-N-acetylglucosamine deacetylase (289 aa).

Zn(2+) contacts are provided by H79, H236, and D240. H263 (proton donor) is an active-site residue.

The protein belongs to the LpxC family. Zn(2+) serves as cofactor.

It carries out the reaction a UDP-3-O-[(3R)-3-hydroxyacyl]-N-acetyl-alpha-D-glucosamine + H2O = a UDP-3-O-[(3R)-3-hydroxyacyl]-alpha-D-glucosamine + acetate. Its pathway is glycolipid biosynthesis; lipid IV(A) biosynthesis; lipid IV(A) from (3R)-3-hydroxytetradecanoyl-[acyl-carrier-protein] and UDP-N-acetyl-alpha-D-glucosamine: step 2/6. Functionally, catalyzes the hydrolysis of UDP-3-O-myristoyl-N-acetylglucosamine to form UDP-3-O-myristoylglucosamine and acetate, the committed step in lipid A biosynthesis. In Rickettsia typhi (strain ATCC VR-144 / Wilmington), this protein is UDP-3-O-acyl-N-acetylglucosamine deacetylase.